We begin with the raw amino-acid sequence, 92 residues long: MAKGQSLQDPFLNALRRERVPVSIYLVNGIKLQGQVESFDQFVILLKNTVSQMVYKHAISTVVPSRPFNVSNHQATNAQAGYNAQHDDGDEK.

Positions 9 to 68 (DPFLNALRRERVPVSIYLVNGIKLQGQVESFDQFVILLKNTVSQMVYKHAISTVVPSRPF) constitute a Sm domain. A compositionally biased stretch (polar residues) spans 73 to 82 (HQATNAQAGY). The tract at residues 73–92 (HQATNAQAGYNAQHDDGDEK) is disordered.

Belongs to the Hfq family. As to quaternary structure, homohexamer.

In terms of biological role, RNA chaperone that binds small regulatory RNA (sRNAs) and mRNAs to facilitate mRNA translational regulation in response to envelope stress, environmental stress and changes in metabolite concentrations. Also binds with high specificity to tRNAs. The chain is RNA-binding protein Hfq from Shewanella pealeana (strain ATCC 700345 / ANG-SQ1).